Reading from the N-terminus, the 473-residue chain is Photosystem II CP43 reaction center protein (473 aa).

Residues 1–14 constitute a propeptide that is removed on maturation; sequence MKTLYSLRRFYPVE. Position 15 is an N-acetylthreonine (Thr-15). Thr-15 carries the post-translational modification Phosphothreonine. The next 5 helical transmembrane spans lie at 69–93, 134–155, 178–200, 255–275, and 291–312; these read LFEVAHFVPEKPMYEQGLILLPHLA, LLGPETLEESFPFFGYVWKDRN, KALYFGGVYDTWAPGGGDVRKIT, KPFAWARRAFVWSGEAYLSYS, and WFNNTAYPSEFYGPTGPEASQA. A [CaMn4O5] cluster-binding site is contributed by Glu-367. A helical membrane pass occupies residues 447-471; that stretch reads RARAAAAGFEKGIDRDFEPVLSMTP.

The protein belongs to the PsbB/PsbC family. PsbC subfamily. In terms of assembly, PSII is composed of 1 copy each of membrane proteins PsbA, PsbB, PsbC, PsbD, PsbE, PsbF, PsbH, PsbI, PsbJ, PsbK, PsbL, PsbM, PsbT, PsbX, PsbY, PsbZ, Psb30/Ycf12, at least 3 peripheral proteins of the oxygen-evolving complex and a large number of cofactors. It forms dimeric complexes. Binds multiple chlorophylls and provides some of the ligands for the Ca-4Mn-5O cluster of the oxygen-evolving complex. It may also provide a ligand for a Cl- that is required for oxygen evolution. PSII binds additional chlorophylls, carotenoids and specific lipids. is required as a cofactor.

It localises to the plastid. Its subcellular location is the chloroplast thylakoid membrane. One of the components of the core complex of photosystem II (PSII). It binds chlorophyll and helps catalyze the primary light-induced photochemical processes of PSII. PSII is a light-driven water:plastoquinone oxidoreductase, using light energy to abstract electrons from H(2)O, generating O(2) and a proton gradient subsequently used for ATP formation. The polypeptide is Photosystem II CP43 reaction center protein (Amborella trichopoda).